Here is an 854-residue protein sequence, read N- to C-terminus: Selenocysteine insertion sequence-binding protein 2 (854 aa).

Disordered regions lie at residues 332-351 (ADPK…DPSY), 356-394 (HIIH…KYEV), 417-445 (ERRD…KKSQ), and 488-619 (ECAS…PNHT). Polar residues-rich tracts occupy residues 338–350 (SIPS…SDPS) and 361–372 (TQKSKASQGSDL). The short motif at 380-387 (KNKKKKEK) is the Nuclear localization signal element. A compositionally biased stretch (polar residues) spans 426–445 (KFQSKQQPQDNFKNNVKKSQ). Residues 536-547 (ILKERQERKQRL) are compositionally biased toward basic and acidic residues. Over residues 548–559 (QENAVSPAFTSD) the composition is skewed to polar residues. A compositionally biased stretch (acidic residues) spans 560 to 572 (DTQDGESGGDDQF). Residues 593–611 (VEDKSEEPPGTELQRDTEA) are compositionally biased toward basic and acidic residues. The interval 673-694 (LVLGLREVLKHLKLKKLKCVII) is RNA-binding. Residues 787–812 (EPRPQAPPSLPTQGPSCPAEDGPPAL) are disordered.

Expressed at high levels in testis.

Its subcellular location is the nucleus. It is found in the mitochondrion. MRNA-binding protein that binds to the SECIS (selenocysteine insertion sequence) element present in the 3'-UTR of mRNAs encoding selenoproteins and facilitates the incorporation of the rare amino acid selenocysteine. Insertion of selenocysteine at UGA codons is mediated by SECISBP2 and EEFSEC: SECISBP2 (1) specifically binds the SECIS sequence once the 80S ribosome encounters an in-frame UGA codon and (2) contacts the RPS27A/eS31 of the 40S ribosome before ribosome stalling. (3) GTP-bound EEFSEC then delivers selenocysteinyl-tRNA(Sec) to the 80S ribosome and adopts a preaccommodated state conformation. (4) After GTP hydrolysis, EEFSEC dissociates from the assembly, selenocysteinyl-tRNA(Sec) accommodates, and peptide bond synthesis and selenoprotein elongation occur. The sequence is that of Selenocysteine insertion sequence-binding protein 2 from Homo sapiens (Human).